The chain runs to 161 residues: Phosphopantetheine adenylyltransferase (161 aa).

Substrate is bound at residue S8. Residues 8 to 9 and H16 each bind ATP; that span reads SF. Residues K40, L72, and R86 each coordinate substrate. ATP is bound by residues 87–89, E97, and 122–128; these read GLR and FSFVSSS.

The protein belongs to the bacterial CoaD family. Homohexamer. It depends on Mg(2+) as a cofactor.

It localises to the cytoplasm. It catalyses the reaction (R)-4'-phosphopantetheine + ATP + H(+) = 3'-dephospho-CoA + diphosphate. The protein operates within cofactor biosynthesis; coenzyme A biosynthesis; CoA from (R)-pantothenate: step 4/5. Functionally, reversibly transfers an adenylyl group from ATP to 4'-phosphopantetheine, yielding dephospho-CoA (dPCoA) and pyrophosphate. The polypeptide is Phosphopantetheine adenylyltransferase (Thermotoga neapolitana (strain ATCC 49049 / DSM 4359 / NBRC 107923 / NS-E)).